Reading from the N-terminus, the 165-residue chain is uncharacterized protein (165 aa).

The chain crosses the membrane as a helical span at residues Ala-16–Val-36.

It belongs to the asfivirus F165R family.

It localises to the host membrane. This is an uncharacterized protein from African swine fever virus (isolate Tick/Malawi/Lil 20-1/1983) (ASFV).